The sequence spans 475 residues: FAD-dependent monooxygenase janM (475 aa).

Residues 8–24 traverse the membrane as a helical segment; sequence VIIVGGSIGGLTLAHCL. FAD is bound by residues Glu35, Gly49, and Arg108. Residue Asn147 is glycosylated (N-linked (GlcNAc...) asparagine). The FAD site is built by Asp299 and Ala312. A helical membrane pass occupies residues 432–451; the sequence is GWRFHAMLCILMLAILYTWV.

This sequence belongs to the paxM FAD-dependent monooxygenase family. FAD is required as a cofactor.

It is found in the membrane. It functions in the pathway secondary metabolite biosynthesis. Its function is as follows. FAD-dependent monooxygenase; part of the gene cluster that mediates the biosynthesis of the indole diterpenes janthitremanes such as shearinine K or shearinine A. The geranylgeranyl diphosphate (GGPP) synthase janG catalyzes the first step in janthitremane biosynthesis via conversion of farnesyl pyrophosphate and isopentyl pyrophosphate into geranylgeranyl pyrophosphate (GGPP). Condensation of indole-3-glycerol phosphate with GGPP by the prenyl transferase janC then forms 3-geranylgeranylindole (3-GGI). Epoxidation by the FAD-dependent monooxygenase janM leads to a epoxidized-GGI that is substrate of the terpene cyclase janB for cyclization to yield paspaline. Paspaline is subsequently converted to 13-desoxypaspaline by the cytochrome P450 monooxygenase janP, via beta-PC-M6 in a series of alpha-face oxidations. The cytochrome P450 monooxygenase janQ is proposed to carry out sequential beta-face oxidation steps at C-7 and C-13 of 13-desoxypaspaline to form paspalicine and paspalinine respectively. The indole diterpene prenyltransferase janD may then convert paspalinine into shearinine K which is substrate of janO and/or additional enzymes for oxidation and cyclization to generate shearinine A. The chain is FAD-dependent monooxygenase janM from Penicillium janthinellum (Penicillium vitale).